Here is a 501-residue protein sequence, read N- to C-terminus: Amidophosphoribosyltransferase (501 aa).

The active-site Nucleophile is the Cys2. One can recognise a Glutamine amidotransferase type-2 domain in the interval 2–234 (CGIVGIVGKS…PGEAVYITEE (233 aa)). Positions 303, 365, and 366 each coordinate Mg(2+).

It in the C-terminal section; belongs to the purine/pyrimidine phosphoribosyltransferase family. The cofactor is Mg(2+).

The enzyme catalyses 5-phospho-beta-D-ribosylamine + L-glutamate + diphosphate = 5-phospho-alpha-D-ribose 1-diphosphate + L-glutamine + H2O. The protein operates within purine metabolism; IMP biosynthesis via de novo pathway; N(1)-(5-phospho-D-ribosyl)glycinamide from 5-phospho-alpha-D-ribose 1-diphosphate: step 1/2. In terms of biological role, catalyzes the formation of phosphoribosylamine from phosphoribosylpyrophosphate (PRPP) and glutamine. This is Amidophosphoribosyltransferase from Pseudomonas aeruginosa (strain ATCC 15692 / DSM 22644 / CIP 104116 / JCM 14847 / LMG 12228 / 1C / PRS 101 / PAO1).